A 428-amino-acid chain; its full sequence is Elongation factor 1-alpha (428 aa).

A tr-type G domain is found at 5–225; that stretch reads KPILNVAFIG…DGFQPPEKPT (221 aa). The segment at 14-21 is G1; it reads GHVDAGKS. 14 to 21 is a binding site for GTP; that stretch reads GHVDAGKS. S21 is a Mg(2+) binding site. Positions 70-74 are G2; it reads GVTID. Positions 91–94 are G3; it reads DCPG. GTP-binding positions include 91-95 and 149-152; these read DCPGH and NKMD. The G4 stretch occupies residues 149–152; the sequence is NKMD. The segment at 189–191 is G5; the sequence is ASL.

This sequence belongs to the TRAFAC class translation factor GTPase superfamily. Classic translation factor GTPase family. EF-Tu/EF-1A subfamily.

Its subcellular location is the cytoplasm. The catalysed reaction is GTP + H2O = GDP + phosphate + H(+). In terms of biological role, GTP hydrolase that promotes the GTP-dependent binding of aminoacyl-tRNA to the A-site of ribosomes during protein biosynthesis. This chain is Elongation factor 1-alpha, found in Methanococcus vannielii (strain ATCC 35089 / DSM 1224 / JCM 13029 / OCM 148 / SB).